We begin with the raw amino-acid sequence, 373 residues long: MLVSRRLTGARARAPLLASLLEAWCRQGRTTSSYSAFSEPSHVRALVYGNHGDPAKVIQLKNLELTAVEGSDVHVKMLAAPINPSDINMIQGNYGLLPKLPAVGGNEGVGQVIAVGSSVSGLKPGDWVIPANAGLGTWRTEAVFSEEALIGVPKDIPLQSAATLGVNPCTAYRMLVDFEQLQPGDSVIQNASNSGVGQAVIQIASALGLKTINVIRDRPDIKKLTDRLKDLGADYVLTEEELRMPETKNIFKDLPLPRLALNCVGGKSSTELLRHLAPGGTMVTYGGMAKQPVTASVSMLIFKDLKLRGFWLSQWKKNHSPDEFKELILILCNLIRQGQLTAPAWSGIPLQDYQQALEASMKPFVSLKQILTM.

The N-terminal 53 residues, 1–53, are a transit peptide targeting the mitochondrion; sequence MLVSRRLTGARARAPLLASLLEAWCRQGRTTSSYSAFSEPSHVRALVYGNHGD. At Lys61 the chain carries N6-acetyllysine; alternate. Lys61 bears the N6-succinyllysine; alternate mark. Tyr94 acts as the Proton donor in catalysis. NADP(+) is bound by residues Asn167, 193–196, and 216–218; these read NSGV and RDR. N6-acetyllysine; alternate occurs at positions 252 and 267. N6-succinyllysine; alternate is present on residues Lys252 and Lys267. Residues 285–288 and 310–312 contribute to the NADP(+) site; these read YGGM and FWL. Lys316 is modified (N6-succinyllysine). An NADP(+)-binding site is contributed by Lys368.

This sequence belongs to the zinc-containing alcohol dehydrogenase family. Quinone oxidoreductase subfamily. In terms of assembly, homodimer. As to quaternary structure, interacts with PPARA in the nucleus and increases its activity.

It localises to the mitochondrion. It is found in the cytoplasm. The protein resides in the nucleus. It catalyses the reaction a 2,3-saturated acyl-[ACP] + NADP(+) = a (2E)-enoyl-[ACP] + NADPH + H(+). The catalysed reaction is (2E)-butenoyl-[ACP] + NADPH + H(+) = butanoyl-[ACP] + NADP(+). It carries out the reaction (2E)-hexenoyl-[ACP] + NADPH + H(+) = hexanoyl-[ACP] + NADP(+). The enzyme catalyses (2E)-octenoyl-[ACP] + NADPH + H(+) = octanoyl-[ACP] + NADP(+). It catalyses the reaction (2E)-decenoyl-[ACP] + NADPH + H(+) = decanoyl-[ACP] + NADP(+). The catalysed reaction is (2E)-dodecenoyl-[ACP] + NADPH + H(+) = dodecanoyl-[ACP] + NADP(+). It carries out the reaction (2E)-tetradecenoyl-[ACP] + NADPH + H(+) = tetradecanoyl-[ACP] + NADP(+). The enzyme catalyses (2E)-hexadecenoyl-[ACP] + NADPH + H(+) = hexadecanoyl-[ACP] + NADP(+). Its function is as follows. Catalyzes the NADPH-dependent reduction of trans-2-enoyl thioesters in mitochondrial fatty acid synthesis (fatty acid synthesis type II). Fatty acid chain elongation in mitochondria uses acyl carrier protein (ACP) as an acyl group carrier, but the enzyme accepts both ACP and CoA thioesters as substrates in vitro. Displays a preference for medium-chain over short- and long-chain substrates. May provide the octanoyl chain used for lipoic acid biosynthesis, regulating protein lipoylation and mitochondrial respiratory activity particularly in Purkinje cells. Involved in iron homeostasis; affecting Fe-S cluster assembly and ceramide metabolism. Required for proper morphology and bioenergetic functions of mitochondria. Required for maintenance of neurons. The polypeptide is Enoyl-[acyl-carrier-protein] reductase, mitochondrial (Mecr) (Rattus norvegicus (Rat)).